Consider the following 513-residue polypeptide: Leucine-rich repeat-containing protein 24 (513 aa).

An N-terminal signal peptide occupies residues 1–20 (MALRAPALLPLLLLLLPLRA). The region spanning 21–50 (AGCPAACRCYSATVECGALRLRVVPLGIPP) is the LRRNT domain. LRR repeat units follow at residues 51 to 72 (GTQT…ALAP), 75 to 96 (ALRR…AFRA), 99 to 120 (RLLE…AFVG), 123 to 144 (QLRV…TFLH), 147 to 168 (RLQE…ALAG), and 171 to 192 (SLAL…ALQP). One can recognise an LRRCT domain in the interval 204 to 259 (NPWRCDCALHWLGAWIKEGGQRLLTSRDRKIMCAEPPRLALQSLLDVSHSSLICIP). Residues 260 to 361 (PSVHVQPLEL…GAARVPFRLL (102 aa)) form the Ig-like C2-type domain. A disulfide bridge connects residues cysteine 281 and cysteine 345. Residues asparagine 334 and asparagine 363 are each glycosylated (N-linked (GlcNAc...) asparagine). Positions 365 to 391 (SRQQPQQPAQPPPPAARPAGSEPRPEA) are disordered. A helical transmembrane segment spans residues 406-426 (AIAAAIALLALTALLLVAMIC).

Its subcellular location is the membrane. This is Leucine-rich repeat-containing protein 24 (LRRC24) from Homo sapiens (Human).